A 306-amino-acid polypeptide reads, in one-letter code: Nod factor export ATP-binding protein I (306 aa).

Residues 8–238 (IDLVGVRKSF…HIGCNVIEIY (231 aa)) enclose the ABC transporter domain. 40–47 (GPNGAGKS) lines the ATP pocket.

This sequence belongs to the ABC transporter superfamily. Lipooligosaccharide exporter (TC 3.A.1.102) family. As to quaternary structure, the complex is composed of two ATP-binding proteins (NodI) and two transmembrane proteins (NodJ).

The protein localises to the cell inner membrane. Part of the ABC transporter complex NodIJ involved in the export of the nodulation factors (Nod factors), the bacterial signal molecules that induce symbiosis and subsequent nodulation induction. Nod factors are LCO (lipo-chitin oligosaccharide), a modified beta-1,4-linked N-acetylglucosamine oligosaccharide. This subunit is responsible for energy coupling to the transport system. The chain is Nod factor export ATP-binding protein I from Bradyrhizobium diazoefficiens (strain JCM 10833 / BCRC 13528 / IAM 13628 / NBRC 14792 / USDA 110).